The primary structure comprises 131 residues: Small ribosomal subunit protein uS11 (131 aa).

It belongs to the universal ribosomal protein uS11 family. Part of the 30S ribosomal subunit. Interacts with proteins S7 and S18. Binds to IF-3.

Its function is as follows. Located on the platform of the 30S subunit, it bridges several disparate RNA helices of the 16S rRNA. Forms part of the Shine-Dalgarno cleft in the 70S ribosome. The sequence is that of Small ribosomal subunit protein uS11 from Pelobacter propionicus (strain DSM 2379 / NBRC 103807 / OttBd1).